A 451-amino-acid chain; its full sequence is Glucose-6-phosphate isomerase (451 aa).

Residue Glu-291 is the Proton donor of the active site. Residues His-312 and Lys-426 contribute to the active site.

The protein belongs to the GPI family.

It is found in the cytoplasm. It catalyses the reaction alpha-D-glucose 6-phosphate = beta-D-fructose 6-phosphate. It participates in carbohydrate biosynthesis; gluconeogenesis. It functions in the pathway carbohydrate degradation; glycolysis; D-glyceraldehyde 3-phosphate and glycerone phosphate from D-glucose: step 2/4. Functionally, catalyzes the reversible isomerization of glucose-6-phosphate to fructose-6-phosphate. The polypeptide is Glucose-6-phosphate isomerase (Caldanaerobacter subterraneus subsp. tengcongensis (strain DSM 15242 / JCM 11007 / NBRC 100824 / MB4) (Thermoanaerobacter tengcongensis)).